The sequence spans 473 residues: Photosystem II CP43 reaction center protein (473 aa).

Residues 1-14 constitute a propeptide that is removed on maturation; it reads MKTLYSLRRFYPVE. T15 carries the N-acetylthreonine modification. T15 is subject to Phosphothreonine. The next 5 helical transmembrane spans lie at 69 to 93, 134 to 155, 178 to 200, 255 to 275, and 291 to 312; these read LFEV…PHLA, LLGP…KDRN, KALY…RKIT, KPFA…LSYS, and WFNN…ASQA. [CaMn4O5] cluster is bound at residue E367. Residues 447-471 traverse the membrane as a helical segment; that stretch reads RARAAAAGFEKGIDRDFEPALSMTP.

This sequence belongs to the PsbB/PsbC family. PsbC subfamily. In terms of assembly, PSII is composed of 1 copy each of membrane proteins PsbA, PsbB, PsbC, PsbD, PsbE, PsbF, PsbH, PsbI, PsbJ, PsbK, PsbL, PsbM, PsbT, PsbX, PsbY, PsbZ, Psb30/Ycf12, at least 3 peripheral proteins of the oxygen-evolving complex and a large number of cofactors. It forms dimeric complexes. Requires Binds multiple chlorophylls and provides some of the ligands for the Ca-4Mn-5O cluster of the oxygen-evolving complex. It may also provide a ligand for a Cl- that is required for oxygen evolution. PSII binds additional chlorophylls, carotenoids and specific lipids. as cofactor.

It localises to the plastid. Its subcellular location is the chloroplast thylakoid membrane. One of the components of the core complex of photosystem II (PSII). It binds chlorophyll and helps catalyze the primary light-induced photochemical processes of PSII. PSII is a light-driven water:plastoquinone oxidoreductase, using light energy to abstract electrons from H(2)O, generating O(2) and a proton gradient subsequently used for ATP formation. The chain is Photosystem II CP43 reaction center protein from Oenothera argillicola (Appalachian evening primrose).